The primary structure comprises 458 residues: Putative U-box domain-containing protein 46 (458 aa).

Positions 71-144 (EVPKEFICTL…TQWCLVNKYD (74 aa)) constitute a U-box domain. ARM repeat units follow at residues 241-281 (ESNK…SLSA) and 283-322 (DSNKIIIGNSEAVKALIDLIEEGDLLATKEATSTVFNLCI).

It carries out the reaction S-ubiquitinyl-[E2 ubiquitin-conjugating enzyme]-L-cysteine + [acceptor protein]-L-lysine = [E2 ubiquitin-conjugating enzyme]-L-cysteine + N(6)-ubiquitinyl-[acceptor protein]-L-lysine.. It participates in protein modification; protein ubiquitination. In terms of biological role, functions as an E3 ubiquitin ligase. This is Putative U-box domain-containing protein 46 (PUB46) from Arabidopsis thaliana (Mouse-ear cress).